Here is a 188-residue protein sequence, read N- to C-terminus: Inosine triphosphate pyrophosphatase (188 aa).

12–17 (TGNANK) provides a ligand contact to ITP. Position 40 (Glu-40) interacts with Mg(2+). Residues Lys-52, 68 to 69 (DT), Lys-85, 144 to 147 (FGWD), Lys-165, and 170 to 171 (HR) contribute to the ITP site.

It belongs to the HAM1 NTPase family. Homodimer. Requires Mg(2+) as cofactor. Mn(2+) is required as a cofactor.

It localises to the cytoplasm. It is found in the nucleus. It catalyses the reaction ITP + H2O = IMP + diphosphate + H(+). The catalysed reaction is dITP + H2O = dIMP + diphosphate + H(+). It carries out the reaction XTP + H2O = XMP + diphosphate + H(+). Functionally, pyrophosphatase that hydrolyzes non-canonical purine nucleotides such as inosine triphosphate (ITP), deoxyinosine triphosphate (dITP) or xanthosine 5'-triphosphate (XTP) to their respective monophosphate derivatives. The enzyme does not distinguish between the deoxy- and ribose forms. Probably excludes non-canonical purines from RNA and DNA precursor pools, thus preventing their incorporation into RNA and DNA and avoiding chromosomal lesions. The polypeptide is Inosine triphosphate pyrophosphatase (Podospora anserina (strain S / ATCC MYA-4624 / DSM 980 / FGSC 10383) (Pleurage anserina)).